The chain runs to 525 residues: Squalene epoxidase 3 (525 aa).

The helical transmembrane segment at 9 to 29 (HCILTTTFVASLFAFLLLYVL) threads the bilayer. FAD-binding positions include 64 to 65 (VA), 84 to 85 (ER), arginine 92, arginine 163, valine 179, aspartate 341, and methionine 354. Transmembrane regions (helical) follow at residues 452–472 (LVLH…VPLP) and 477–497 (LWLG…IIKA).

This sequence belongs to the squalene monooxygenase family. FAD serves as cofactor. In terms of tissue distribution, expressed in seedlings, leaves, stems, inflorescences and siliques.

It is found in the membrane. It catalyses the reaction squalene + reduced [NADPH--hemoprotein reductase] + O2 = (S)-2,3-epoxysqualene + oxidized [NADPH--hemoprotein reductase] + H2O + H(+). Its pathway is terpene metabolism; lanosterol biosynthesis; lanosterol from farnesyl diphosphate: step 2/3. Catalyzes the stereospecific oxidation of squalene to (S)-2,3-epoxysqualene, and is considered to be a rate-limiting enzyme in steroid biosynthesis. Can produce not only oxidosqualene, but also 2,3:22,23-dioxidosqualene. The polypeptide is Squalene epoxidase 3 (SQE3) (Arabidopsis thaliana (Mouse-ear cress)).